The following is a 403-amino-acid chain: Alkaline protease 1 (403 aa).

A signal peptide spans 1–21 (MQSIKRTLLLLGALLPAALAA). A propeptide spanning residues 22-125 (PAREPHPSSN…QIWYLDALTT (104 aa)) is cleaved from the precursor. In terms of domain architecture, Inhibitor I9 spans 36-120 (KYIITFKSGI…HVEEDQIWYL (85 aa)). Residues 130–403 (PWGLGSISHK…PNKLAYNGAA (274 aa)) enclose the Peptidase S8 domain. Residues Asp162 and His193 each act as charge relay system in the active site. N-linked (GlcNAc...) asparagine glycans are attached at residues Asn253 and Asn307. The active-site Charge relay system is the Ser349.

It belongs to the peptidase S8 family.

It localises to the secreted. It catalyses the reaction Hydrolysis of proteins with broad specificity, and of Bz-Arg-OEt &gt; Ac-Tyr-OEt. Does not hydrolyze peptide amides.. Functionally, secreted alkaline protease that allows assimilation of proteinaceous substrates. In Aspergillus clavatus (strain ATCC 1007 / CBS 513.65 / DSM 816 / NCTC 3887 / NRRL 1 / QM 1276 / 107), this protein is Alkaline protease 1 (alp1).